A 586-amino-acid polypeptide reads, in one-letter code: MFS-type transporter ucsD (586 aa).

Residues 1 to 56 form a disordered region; the sequence is MSRNSGTTLEDGPLHADPTTEAPNNATVTTNVTANDENTEKEVDADAAAAAPAEAP. Low complexity-rich tracts occupy residues 19–36 and 46–56; these read TTEA…TAND and DAAAAAPAEAP. 2 N-linked (GlcNAc...) asparagine glycosylation sites follow: Asn-25 and Asn-31. The next 8 membrane-spanning stretches (helical) occupy residues 65–85, 101–121, 131–151, 164–184, 192–212, 220–240, 263–283, and 290–310; these read WAIV…GTII, SFIW…PLMA, WLTL…GGAN, GFGG…LVPL, GIVQ…GGLL, WVFY…FFFL, AIFI…GAVY, and VIVP…YEWT. N-linked (GlcNAc...) asparagine glycosylation is present at Asn-324. Transmembrane regions (helical) follow at residues 330–350, 368–388, 393–413, 420–440, 458–478, and 532–552; these read VLGV…FMPI, LPLF…LAKF, PMHL…SLLD, AWAC…AILL, VWTF…SAIF, and LRTV…LIWL.

The protein belongs to the major facilitator superfamily.

Its subcellular location is the membrane. Its function is as follows. MFS-type transporter; part of the gene cluster that mediates the biosynthesis of UCS1025A, a member of the pyrrolizidinone family that acts as a strong telomerase inhibitor and displays potent antibacterial and antitumor properties. These compounds share a hemiaminal-containing pyrrolizidinone core fused with a gamma-lactone, giving a furopyrrolizidine that is connected to a decalin fragment. The chain is MFS-type transporter ucsD from Acremonium sp.